The sequence spans 488 residues: MTKNNEAGWNLDHSYTTLPQSFYTEIPPTPVSSPELVKLNHSLAISLGFNPEELKKEAEIAIFAGNALPEGAHPLAQAYAGHQFGHFNMLGDGRALLIGEQITPSGKRFDIQLKGSGPTPYSRRGDGRAALGPMLREYIISEAMYALDIPTTRSLAVVTTGEPTYRETKLPGAILTRVASSHIRVGTFQYAAARGSIEDLQSLADYTIKRHYPEIEAHENRYTALLQEVIKKQASLIAKWQLVGFIHGVMNTDNITISGETIDYGPCAFMDNYDQGTVFSSIDTQGRYAYGNQPYMAAWDLARLAESLIPILHEDEEEALKIAQDEISKFSVQYENNWFLGMKKKLGLFSKEEQDHSLIEQLLKMMEKYKADYTNTFRSLTLNTIENTALFESPEFKEWYKLWQSRLEKQEESKENAYEMMKNNNPSIIPRNHRVEEALEAAVTNGDYSVMEKLLEALANPYAYSTDQEEYCVLPTPTNRPYRTFCGT.

8 residues coordinate ATP: Gly91, Gly93, Arg94, Lys114, Asp126, Gly127, Arg177, and Arg184. The active-site Proton acceptor is Asp253. Residues Asn254 and Asp263 each contribute to the Mg(2+) site. Residue Asp263 participates in ATP binding.

It belongs to the SELO family. Mg(2+) is required as a cofactor. Mn(2+) serves as cofactor.

It catalyses the reaction L-seryl-[protein] + ATP = 3-O-(5'-adenylyl)-L-seryl-[protein] + diphosphate. It carries out the reaction L-threonyl-[protein] + ATP = 3-O-(5'-adenylyl)-L-threonyl-[protein] + diphosphate. The catalysed reaction is L-tyrosyl-[protein] + ATP = O-(5'-adenylyl)-L-tyrosyl-[protein] + diphosphate. The enzyme catalyses L-histidyl-[protein] + UTP = N(tele)-(5'-uridylyl)-L-histidyl-[protein] + diphosphate. It catalyses the reaction L-seryl-[protein] + UTP = O-(5'-uridylyl)-L-seryl-[protein] + diphosphate. It carries out the reaction L-tyrosyl-[protein] + UTP = O-(5'-uridylyl)-L-tyrosyl-[protein] + diphosphate. Its function is as follows. Nucleotidyltransferase involved in the post-translational modification of proteins. It can catalyze the addition of adenosine monophosphate (AMP) or uridine monophosphate (UMP) to a protein, resulting in modifications known as AMPylation and UMPylation. In Bacillus thuringiensis subsp. konkukian (strain 97-27), this protein is Protein nucleotidyltransferase YdiU.